The sequence spans 532 residues: 2,3-bisphosphoglycerate-independent phosphoglycerate mutase (532 aa).

Asp15 and Ser65 together coordinate Mn(2+). The active-site Phosphoserine intermediate is the Ser65. Substrate is bound by residues His126, 156 to 157 (RD), Arg188, Arg194, 258 to 261 (RPDR), and Lys331. Mn(2+) is bound by residues Asp398, His402, Asp439, His440, and His457.

Belongs to the BPG-independent phosphoglycerate mutase family. In terms of assembly, monomer. Mn(2+) is required as a cofactor.

It catalyses the reaction (2R)-2-phosphoglycerate = (2R)-3-phosphoglycerate. It participates in carbohydrate degradation; glycolysis; pyruvate from D-glyceraldehyde 3-phosphate: step 3/5. Its function is as follows. Catalyzes the interconversion of 2-phosphoglycerate and 3-phosphoglycerate. The chain is 2,3-bisphosphoglycerate-independent phosphoglycerate mutase from Synechocystis sp. (strain ATCC 27184 / PCC 6803 / Kazusa).